Here is a 418-residue protein sequence, read N- to C-terminus: NADH-quinone oxidoreductase subunit H (418 aa).

9 helical membrane-spanning segments follow: residues 15–35 (LVLG…LVAI), 83–103 (FVYF…FAFI), 123–143 (LPVA…GIVL), 164–184 (VISY…YAGS), 197–217 (VWFV…MVGE), 262–282 (LATA…MWAG), 287–307 (WWPV…YFWL), 321–341 (GLGW…AAVI), and 349–369 (YAHW…ALVL). The segment at 394–418 (AAHRAGFHPGIPDTAAAGESAGGRE) is disordered.

It belongs to the complex I subunit 1 family. As to quaternary structure, NDH-1 is composed of 14 different subunits. Subunits NuoA, H, J, K, L, M, N constitute the membrane sector of the complex.

The protein resides in the cell membrane. The enzyme catalyses a quinone + NADH + 5 H(+)(in) = a quinol + NAD(+) + 4 H(+)(out). Its function is as follows. NDH-1 shuttles electrons from NADH, via FMN and iron-sulfur (Fe-S) centers, to quinones in the respiratory chain. The immediate electron acceptor for the enzyme in this species is believed to be menaquinone. Couples the redox reaction to proton translocation (for every two electrons transferred, four hydrogen ions are translocated across the cytoplasmic membrane), and thus conserves the redox energy in a proton gradient. This subunit may bind ubiquinone. This is NADH-quinone oxidoreductase subunit H from Mycobacterium avium (strain 104).